A 325-amino-acid chain; its full sequence is Coiled-coil domain-containing protein 160 (325 aa).

Disordered regions lie at residues 18-45 (SAQD…KGME) and 81-123 (ENKR…CSTD). The span at 81–91 (ENKRNISKNET) shows a compositional bias: basic and acidic residues. Over residues 92–123 (DTNSASYESSNVDVTTEESFNSTEDNSTCSTD) the composition is skewed to polar residues. A coiled-coil region spans residues 144–288 (KLCLNLLNEE…SVIKNELRTE (145 aa)).

The protein belongs to the CCDC160 family.

The polypeptide is Coiled-coil domain-containing protein 160 (CCDC160) (Homo sapiens (Human)).